The following is a 112-amino-acid chain: MTELAQMKCEACQADAPKVTDEELAQLIAKIPDWGVEVRGGVMQLERVYKFKNFKLAMEFTNKLADLAEADFHHPGILTEWGKVTVTWWSHSIKGLHKNDFIMAAKTDTLFQ.

It belongs to the pterin-4-alpha-carbinolamine dehydratase family.

It carries out the reaction (4aS,6R)-4a-hydroxy-L-erythro-5,6,7,8-tetrahydrobiopterin = (6R)-L-erythro-6,7-dihydrobiopterin + H2O. In Shewanella pealeana (strain ATCC 700345 / ANG-SQ1), this protein is Putative pterin-4-alpha-carbinolamine dehydratase.